Here is a 197-residue protein sequence, read N- to C-terminus: uncharacterized protein (197 aa).

The protein belongs to the methyltransferase superfamily.

This is an uncharacterized protein from Mycobacterium bovis (strain ATCC BAA-935 / AF2122/97).